A 515-amino-acid chain; its full sequence is Interferon-induced, double-stranded RNA-activated protein kinase (515 aa).

Alanine 2 is modified (N-acetylalanine). One can recognise a DRBM 1 domain in the interval phenylalanine 8 to asparagine 76. Lysine 68 is covalently cross-linked (Glycyl lysine isopeptide (Lys-Gly) (interchain with G-Cter in ISG15)). Threonine 84 is modified (phosphothreonine). Residues asparagine 95 to lysine 162 form the DRBM 2 domain. Tyrosine 96 carries the phosphotyrosine; by autocatalysis modification. Residue lysine 154 forms a Glycyl lysine isopeptide (Lys-Gly) (interchain with G-Cter in ISG15) linkage. Tyrosine 157 carries the post-translational modification Phosphotyrosine; by autocatalysis. Residues glutamate 204–proline 224 form a disordered region. Threonine 233 carries the phosphothreonine modification. The interval aspartate 241–cysteine 515 is interaction with TRAF5. The region spanning phenylalanine 242 to arginine 504 is the Protein kinase domain. Isoleucine 248–valine 256 is a binding site for ATP. Tyrosine 268 carries the phosphotyrosine; by autocatalysis modification. Position 271 (lysine 271) interacts with ATP. The Proton acceptor role is filled by aspartate 376. Phosphothreonine; by autocatalysis occurs at positions 409 and 414. Serine 419 carries the post-translational modification Phosphoserine.

The protein belongs to the protein kinase superfamily. Ser/Thr protein kinase family. GCN2 subfamily. In terms of assembly, homodimer. Interacts with DNAJC3 and STRBP. Forms a complex with FANCA, FANCC, FANCG and HSP70. Interacts with ADAR/ADAR1. The inactive form interacts with NCK1. Interacts (via the kinase catalytic domain) with STAT3 (via SH2 domain), TRAF2 (C-terminus), TRAF5 (C-terminus) and TRAF6 (C-terminus). Interacts with MAP2K6, TARBP2, NLRP1, NLRC4 and AIM2. Interacts (via DRBM 1 domain) with DUS2L (via DRBM domain). Interacts with DHX9 (via N-terminus) and this interaction is dependent upon activation of the kinase. The inactive form interacts with GSN. Interacts with IKBKB/IKKB, NPM1, NLRP3 and IRS1. Autophosphorylated on several Ser, Thr and Tyr residues. Autophosphorylation of Thr-414 is dependent on Thr-409 and is stimulated by dsRNA binding and dimerization. Autophosphorylation apparently leads to the activation of the kinase. Tyrosine autophosphorylation is essential for efficient dsRNA-binding, dimerization, and kinase activation. In terms of tissue distribution, expressed in heart, lung, brain, kidney, testes, thymus and bone marrow.

The protein resides in the cytoplasm. It localises to the nucleus. Its subcellular location is the perinuclear region. It catalyses the reaction L-seryl-[protein] + ATP = O-phospho-L-seryl-[protein] + ADP + H(+). It carries out the reaction L-threonyl-[protein] + ATP = O-phospho-L-threonyl-[protein] + ADP + H(+). The enzyme catalyses L-tyrosyl-[protein] + ATP = O-phospho-L-tyrosyl-[protein] + ADP + H(+). Its activity is regulated as follows. Initially produced in an inactive form and is activated by binding to viral dsRNA, which causes dimerization and autophosphorylation in the activation loop and stimulation of function. ISGylation can activate it in the absence of viral infection. Can also be activated by heparin, pro-inflammatory stimuli, growth factors, cytokines, oxidative stress and the cellular protein PRKRA. Activity is markedly stimulated by manganese ions. Activation is blocked by the cellular proteins TARBP2, DUS2L, NPM1, NCK1 and ADAR. Functionally, IFN-induced dsRNA-dependent serine/threonine-protein kinase that phosphorylates the alpha subunit of eukaryotic translation initiation factor 2 (EIF2S1/eIF-2-alpha) and plays a key role in the innate immune response to viral infection. Inhibits viral replication via the integrated stress response (ISR): EIF2S1/eIF-2-alpha phosphorylation in response to viral infection converts EIF2S1/eIF-2-alpha in a global protein synthesis inhibitor, resulting to a shutdown of cellular and viral protein synthesis, while concomitantly initiating the preferential translation of ISR-specific mRNAs, such as the transcriptional activator ATF4. Exerts its antiviral activity on a wide range of DNA and RNA viruses including west nile virus (WNV), sindbis virus (SV), foot-and-mouth virus (FMDV), semliki Forest virus (SFV) and lymphocytic choriomeningitis virus (LCMV). Also involved in the regulation of signal transduction, apoptosis, cell proliferation and differentiation: phosphorylates other substrates including p53/TP53, PPP2R5A, DHX9, ILF3, and IRS1. In addition to serine/threonine-protein kinase activity, also has tyrosine-protein kinase activity and phosphorylates CDK1 at 'Tyr-4' upon DNA damage, facilitating its ubiquitination and proteasomal degradation. Either as an adapter protein and/or via its kinase activity, can regulate various signaling pathways (p38 MAP kinase, NF-kappa-B and insulin signaling pathways) and transcription factors (JUN, STAT1, STAT3, IRF1, ATF3) involved in the expression of genes encoding pro-inflammatory cytokines and IFNs. Activates the NF-kappa-B pathway via interaction with IKBKB and TRAF family of proteins and activates the p38 MAP kinase pathway via interaction with MAP2K6. Can act as both a positive and negative regulator of the insulin signaling pathway (ISP). Negatively regulates ISP by inducing the inhibitory phosphorylation of insulin receptor substrate 1 (IRS1) at 'Ser-312' and positively regulates ISP via phosphorylation of PPP2R5A which activates FOXO1, which in turn up-regulates the expression of insulin receptor substrate 2 (IRS2). Can regulate NLRP3 inflammasome assembly and the activation of NLRP3, NLRP1, AIM2 and NLRC4 inflammasomes. Plays a role in the regulation of the cytoskeleton by binding to gelsolin (GSN), sequestering the protein in an inactive conformation away from actin. This chain is Interferon-induced, double-stranded RNA-activated protein kinase (Eif2ak2), found in Mus musculus (Mouse).